The primary structure comprises 358 residues: Peptide chain release factor 1 (358 aa).

An N5-methylglutamine modification is found at Q233.

This sequence belongs to the prokaryotic/mitochondrial release factor family. Methylated by PrmC. Methylation increases the termination efficiency of RF1.

The protein localises to the cytoplasm. In terms of biological role, peptide chain release factor 1 directs the termination of translation in response to the peptide chain termination codons UAG and UAA. This chain is Peptide chain release factor 1, found in Clostridium botulinum (strain 657 / Type Ba4).